The following is a 214-amino-acid chain: Probable GTP-binding protein EngB (214 aa).

The region spanning 30-204 is the EngB-type G domain; that stretch reads EGFEVAFAGR…YTVLAGWMEL (175 aa). GTP is bound by residues 38–45, 64–68, 82–85, 149–152, and 182–185; these read GRSNAGKS, GRTQL, DLPG, TKAD, and LFSA. 2 residues coordinate Mg(2+): Ser45 and Thr66.

Belongs to the TRAFAC class TrmE-Era-EngA-EngB-Septin-like GTPase superfamily. EngB GTPase family. It depends on Mg(2+) as a cofactor.

Functionally, necessary for normal cell division and for the maintenance of normal septation. In Pseudomonas fluorescens (strain Pf0-1), this protein is Probable GTP-binding protein EngB.